We begin with the raw amino-acid sequence, 930 residues long: Protocadherin gamma-B6 (930 aa).

A signal peptide spans methionine 1–cysteine 30. 6 consecutive Cadherin domains span residues glutamate 31–phenylalanine 133, aspartate 134–phenylalanine 242, serine 243–isoleucine 347, isoleucine 348–phenylalanine 452, aspartate 453–valine 562, and aspartate 570–leucine 675. The Extracellular portion of the chain corresponds to glutamate 31–tyrosine 691. 3 N-linked (GlcNAc...) asparagine glycosylation sites follow: asparagine 304, asparagine 419, and asparagine 545. Residues leucine 692–alanine 712 form a helical membrane-spanning segment. The Cytoplasmic segment spans residues leucine 713–lysine 930. 2 disordered regions span residues proline 791–asparagine 839 and alanine 900–lysine 930. Residues histidine 800–asparagine 839 are compositionally biased toward polar residues. Residues asparagine 920–lysine 930 show a composition bias toward basic residues.

The protein resides in the cell membrane. Functionally, potential calcium-dependent cell-adhesion protein. May be involved in the establishment and maintenance of specific neuronal connections in the brain. In Pan troglodytes (Chimpanzee), this protein is Protocadherin gamma-B6 (PCDHGB6).